Here is a 250-residue protein sequence, read N- to C-terminus: Large ribosomal subunit protein uL30B (250 aa).

It belongs to the universal ribosomal protein uL30 family. Component of the large ribosomal subunit (LSU). Mature yeast ribosomes consist of a small (40S) and a large (60S) subunit. The 40S small subunit contains 1 molecule of ribosomal RNA (18S rRNA) and at least 33 different proteins. The large 60S subunit contains 3 rRNA molecules (25S, 5.8S and 5S rRNA) and at least 46 different proteins.

Its subcellular location is the cytoplasm. It is found in the nucleus. The protein resides in the nucleolus. In terms of biological role, component of the ribosome, a large ribonucleoprotein complex responsible for the synthesis of proteins in the cell. The small ribosomal subunit (SSU) binds messenger RNAs (mRNAs) and translates the encoded message by selecting cognate aminoacyl-transfer RNA (tRNA) molecules. The large subunit (LSU) contains the ribosomal catalytic site termed the peptidyl transferase center (PTC), which catalyzes the formation of peptide bonds, thereby polymerizing the amino acids delivered by tRNAs into a polypeptide chain. The nascent polypeptides leave the ribosome through a tunnel in the LSU and interact with protein factors that function in enzymatic processing, targeting, and the membrane insertion of nascent chains at the exit of the ribosomal tunnel. This chain is Large ribosomal subunit protein uL30B (rpl702), found in Schizosaccharomyces pombe (strain 972 / ATCC 24843) (Fission yeast).